Consider the following 568-residue polypeptide: Putative F-box protein At5g39480 (568 aa).

One can recognise an F-box domain in the interval 9-55; it reads ACLLLTLPEDVFAVISRFLSPSDICNLILCGKSLPALVDTEKMWLVQ. The interval 315–337 is disordered; it reads TNVLGESSSSKNTTPSQSEIRVS. Low complexity predominate over residues 321-332; sequence SSSSKNTTPSQS.

In Arabidopsis thaliana (Mouse-ear cress), this protein is Putative F-box protein At5g39480.